Consider the following 311-residue polypeptide: Aspartate carbamoyltransferase catalytic subunit (311 aa).

Positions 55 and 56 each coordinate carbamoyl phosphate. L-aspartate is bound at residue Lys-85. Positions 106, 135, and 138 each coordinate carbamoyl phosphate. Residues Arg-168 and Arg-230 each coordinate L-aspartate. The carbamoyl phosphate site is built by Leu-268 and Pro-269.

Belongs to the aspartate/ornithine carbamoyltransferase superfamily. ATCase family. In terms of assembly, heterododecamer (2C3:3R2) of six catalytic PyrB chains organized as two trimers (C3), and six regulatory PyrI chains organized as three dimers (R2).

The catalysed reaction is carbamoyl phosphate + L-aspartate = N-carbamoyl-L-aspartate + phosphate + H(+). It participates in pyrimidine metabolism; UMP biosynthesis via de novo pathway; (S)-dihydroorotate from bicarbonate: step 2/3. Catalyzes the condensation of carbamoyl phosphate and aspartate to form carbamoyl aspartate and inorganic phosphate, the committed step in the de novo pyrimidine nucleotide biosynthesis pathway. In Salmonella paratyphi A (strain AKU_12601), this protein is Aspartate carbamoyltransferase catalytic subunit.